Consider the following 353-residue polypeptide: Protein RecA (353 aa).

65–72 is a binding site for ATP; that stretch reads GPESSGKT.

The protein belongs to the RecA family.

It is found in the cytoplasm. Its function is as follows. Can catalyze the hydrolysis of ATP in the presence of single-stranded DNA, the ATP-dependent uptake of single-stranded DNA by duplex DNA, and the ATP-dependent hybridization of homologous single-stranded DNAs. It interacts with LexA causing its activation and leading to its autocatalytic cleavage. The protein is Protein RecA of Aeromonas salmonicida (strain A449).